The chain runs to 275 residues: NH(3)-dependent NAD(+) synthetase (275 aa).

Gly-47 to Ser-54 provides a ligand contact to ATP. Asp-53 is a Mg(2+) binding site. Position 141 (Arg-141) interacts with deamido-NAD(+). Thr-161 is a binding site for ATP. Residue Glu-166 coordinates Mg(2+). The deamido-NAD(+) site is built by Lys-174 and Asp-181. Lys-190 and Thr-212 together coordinate ATP. His-261 to Lys-262 is a binding site for deamido-NAD(+).

Belongs to the NAD synthetase family. As to quaternary structure, homodimer.

The enzyme catalyses deamido-NAD(+) + NH4(+) + ATP = AMP + diphosphate + NAD(+) + H(+). The protein operates within cofactor biosynthesis; NAD(+) biosynthesis; NAD(+) from deamido-NAD(+) (ammonia route): step 1/1. Catalyzes the ATP-dependent amidation of deamido-NAD to form NAD. Uses ammonia as a nitrogen source. In Oceanobacillus iheyensis (strain DSM 14371 / CIP 107618 / JCM 11309 / KCTC 3954 / HTE831), this protein is NH(3)-dependent NAD(+) synthetase.